Consider the following 478-residue polypeptide: Methylenetetrahydrofolate--tRNA-(uracil-5-)-methyltransferase TrmFO (478 aa).

16–21 provides a ligand contact to FAD; sequence GAGLAG. The disordered stretch occupies residues 429–448; sequence PLANPPTKGPDGKRLRGPEK. Over residues 438–448 the composition is skewed to basic and acidic residues; sequence PDGKRLRGPEK.

The protein belongs to the MnmG family. TrmFO subfamily. It depends on FAD as a cofactor.

The protein resides in the cytoplasm. It carries out the reaction uridine(54) in tRNA + (6R)-5,10-methylene-5,6,7,8-tetrahydrofolate + NADH + H(+) = 5-methyluridine(54) in tRNA + (6S)-5,6,7,8-tetrahydrofolate + NAD(+). The catalysed reaction is uridine(54) in tRNA + (6R)-5,10-methylene-5,6,7,8-tetrahydrofolate + NADPH + H(+) = 5-methyluridine(54) in tRNA + (6S)-5,6,7,8-tetrahydrofolate + NADP(+). In terms of biological role, catalyzes the folate-dependent formation of 5-methyl-uridine at position 54 (M-5-U54) in all tRNAs. In Rhodopseudomonas palustris (strain ATCC BAA-98 / CGA009), this protein is Methylenetetrahydrofolate--tRNA-(uracil-5-)-methyltransferase TrmFO.